Consider the following 743-residue polypeptide: Tegument protein UL46 homolog (743 aa).

Disordered regions lie at residues 437–481, 522–590, and 693–743; these read GCPP…VSSA, HQRS…SGYM, and RVRL…VSSL. Residues 526–552 show a composition bias toward low complexity; that stretch reads DSSSSDNSSCSSTETEYITISSTPSPT. Polar residues-rich tracts occupy residues 573–586 and 697–716; these read QPANTVSEYSSPAN and GTTTPTSANEATEKYTTPSS. Positions 722 to 743 are enriched in low complexity; the sequence is RTLSTSESPESSPEQQERVSSL.

It belongs to the herpesviridae HHV-1 VP11/12 protein family. As to quaternary structure, interacts with VP16.

The protein localises to the virion tegument. Its subcellular location is the host cell membrane. Functionally, abundant tegument protein. Trans-activates the immediate early genes. This Equus caballus (Horse) protein is Tegument protein UL46 homolog.